We begin with the raw amino-acid sequence, 257 residues long: DNA repair protein RecO (257 aa).

It belongs to the RecO family.

Functionally, involved in DNA repair and RecF pathway recombination. The sequence is that of DNA repair protein RecO from Variovorax paradoxus (strain S110).